Here is a 259-residue protein sequence, read N- to C-terminus: MAIHLVIIDALNLIRRVHSAQPDPTDIANTIQNTCRTLQRIISESHPTHIVAVFDHLGSDRGWRAEILPEYKQGRKPMPEPLLNGLEKIQDAWWQLGIDSLLSEGDEADDLVATLACKVAQHGEKVTIISTDKGYCQLLSPTLQIRDYFQHRWLDQPFIEQEFGVKPQQLSDYWGLTGISSSQVTGIPGIGPKAAKEILSQFDDIEQAFLSPDLPKKYRTKFDQHIELARRCKRVSALKTDIELGFNLQDLRFTANETH.

Aspartate 109 contacts Mg(2+). The 5'-3' exonuclease domain maps to 165–255; the sequence is VKPQQLSDYW…FNLQDLRFTA (91 aa). Leucine 176, isoleucine 187, and isoleucine 190 together coordinate K(+). The tract at residues 189–194 is interaction with DNA; the sequence is GIGPKA.

Belongs to the Xni family. Mg(2+) is required as a cofactor. It depends on K(+) as a cofactor.

Has flap endonuclease activity. During DNA replication, flap endonucleases cleave the 5'-overhanging flap structure that is generated by displacement synthesis when DNA polymerase encounters the 5'-end of a downstream Okazaki fragment. The protein is Flap endonuclease Xni of Vibrio vulnificus (strain YJ016).